Consider the following 550-residue polypeptide: DNA-directed RNA polymerase subunit alpha (550 aa).

The interval 1 to 333 is alpha N-terminal domain (alpha-NTD); the sequence is MTIYPNLKKI…QENNLFRSEK (333 aa). Positions 185 to 258 are insert; the sequence is TTLKKRNILL…TSLGHDTVSN (74 aa). Residues 378–550 are alpha C-terminal domain (alpha-CTD); it reads FLNQSLGQNK…SLTFEYARKF (173 aa).

This sequence belongs to the RNA polymerase alpha chain family. In plastids the minimal PEP RNA polymerase catalytic core is composed of four subunits: alpha, beta, beta', and beta''. When a (nuclear-encoded) sigma factor is associated with the core the holoenzyme is formed, which can initiate transcription.

The protein resides in the plastid. It localises to the chloroplast. It carries out the reaction RNA(n) + a ribonucleoside 5'-triphosphate = RNA(n+1) + diphosphate. In terms of biological role, DNA-dependent RNA polymerase catalyzes the transcription of DNA into RNA using the four ribonucleoside triphosphates as substrates. The chain is DNA-directed RNA polymerase subunit alpha (rpoA) from Chlamydomonas reinhardtii (Chlamydomonas smithii).